We begin with the raw amino-acid sequence, 391 residues long: S-adenosylmethionine synthase (391 aa).

His-19 is an ATP binding site. Asp-21 is a Mg(2+) binding site. Position 47 (Glu-47) interacts with K(+). Glu-60 and Gln-103 together coordinate L-methionine. Residues 103–113 form a flexible loop region; sequence QSPDIAQGVDR. Residues 168 to 170, 236 to 237, Asp-245, 251 to 252, Ala-268, and Lys-272 each bind ATP; these read DGK, RF, and RK. Asp-245 serves as a coordination point for L-methionine. Position 276 (Lys-276) interacts with L-methionine.

It belongs to the AdoMet synthase family. As to quaternary structure, homotetramer; dimer of dimers. It depends on Mg(2+) as a cofactor. K(+) is required as a cofactor.

It is found in the cytoplasm. It catalyses the reaction L-methionine + ATP + H2O = S-adenosyl-L-methionine + phosphate + diphosphate. It participates in amino-acid biosynthesis; S-adenosyl-L-methionine biosynthesis; S-adenosyl-L-methionine from L-methionine: step 1/1. Catalyzes the formation of S-adenosylmethionine (AdoMet) from methionine and ATP. The overall synthetic reaction is composed of two sequential steps, AdoMet formation and the subsequent tripolyphosphate hydrolysis which occurs prior to release of AdoMet from the enzyme. The chain is S-adenosylmethionine synthase from Oleidesulfovibrio alaskensis (strain ATCC BAA-1058 / DSM 17464 / G20) (Desulfovibrio alaskensis).